A 118-amino-acid chain; its full sequence is Large ribosomal subunit protein uL18 (118 aa).

This sequence belongs to the universal ribosomal protein uL18 family. In terms of assembly, part of the 50S ribosomal subunit; part of the 5S rRNA/L5/L18/L25 subcomplex. Contacts the 5S and 23S rRNAs.

Functionally, this is one of the proteins that bind and probably mediate the attachment of the 5S RNA into the large ribosomal subunit, where it forms part of the central protuberance. The protein is Large ribosomal subunit protein uL18 of Phenylobacterium zucineum (strain HLK1).